The chain runs to 300 residues: GTPase Era (300 aa).

The Era-type G domain occupies 6–173 (KSGFVAIVGR…MDVLVEQMPE (168 aa)). Residues 14–21 (GRPNVGKS) form a G1 region. 14-21 (GRPNVGKS) is a binding site for GTP. The tract at residues 40 to 44 (QTTRN) is G2. The segment at 61–64 (DTPG) is G3. GTP is bound by residues 61 to 65 (DTPGI) and 123 to 126 (NKID). A G4 region spans residues 123–126 (NKID). A G5 region spans residues 152–154 (ISA). The region spanning 204-281 (TRDEIPHSVA…YLELWVKVQK (78 aa)) is the KH type-2 domain.

Belongs to the TRAFAC class TrmE-Era-EngA-EngB-Septin-like GTPase superfamily. Era GTPase family. As to quaternary structure, monomer.

Its subcellular location is the cytoplasm. The protein localises to the cell membrane. An essential GTPase that binds both GDP and GTP, with rapid nucleotide exchange. Plays a role in 16S rRNA processing and 30S ribosomal subunit biogenesis and possibly also in cell cycle regulation and energy metabolism. The polypeptide is GTPase Era (Enterococcus faecalis (strain ATCC 700802 / V583)).